Here is a 209-residue protein sequence, read N- to C-terminus: Large ribosomal subunit protein uL3 (209 aa).

This sequence belongs to the universal ribosomal protein uL3 family. In terms of assembly, part of the 50S ribosomal subunit. Forms a cluster with proteins L14 and L19.

Functionally, one of the primary rRNA binding proteins, it binds directly near the 3'-end of the 23S rRNA, where it nucleates assembly of the 50S subunit. This Desulfotalea psychrophila (strain LSv54 / DSM 12343) protein is Large ribosomal subunit protein uL3.